The primary structure comprises 276 residues: Diaminopimelate epimerase (276 aa).

3 residues coordinate substrate: N13, Q46, and N66. C75 acts as the Proton donor in catalysis. Residues 76–77 (GN), N159, N192, and 210–211 (ER) contribute to the substrate site. Catalysis depends on C219, which acts as the Proton acceptor. Substrate is bound at residue 220 to 221 (GT).

It belongs to the diaminopimelate epimerase family. As to quaternary structure, homodimer.

Its subcellular location is the cytoplasm. It carries out the reaction (2S,6S)-2,6-diaminopimelate = meso-2,6-diaminopimelate. It functions in the pathway amino-acid biosynthesis; L-lysine biosynthesis via DAP pathway; DL-2,6-diaminopimelate from LL-2,6-diaminopimelate: step 1/1. In terms of biological role, catalyzes the stereoinversion of LL-2,6-diaminopimelate (L,L-DAP) to meso-diaminopimelate (meso-DAP), a precursor of L-lysine and an essential component of the bacterial peptidoglycan. This Cellvibrio japonicus (strain Ueda107) (Pseudomonas fluorescens subsp. cellulosa) protein is Diaminopimelate epimerase.